A 340-amino-acid polypeptide reads, in one-letter code: MTDRLTIRRPDDWHVHLRDGAMLAHVAPYTARQFARAIVMPNLSPPVTTAEEGRAYRDRITAAVPADLDFTPLIVAYLTDATDADEIARGHAEGVFTAAKLYPAHATTGSAHGVTDVANIMGVLERMQDIGMPLLIHGEVTDHDVDIFDREAVFIERTLEPLVRALPGLKIVFEHITTAEAAQFVADAPANVAATITPQHLHINRNAMLVGGIRPHAYCLPVAKREHHRLAVRAAATSGSPKFFLGTDSAPHAVHMKEASCGCAGIFNAPFALESYAMAFDQDGALANFEGFASEHGPRFYGLPLNEGTVTLERAEITVPDRIGDVVPFHAGETIGWRLV.

Residues histidine 14 and histidine 16 each contribute to the Zn(2+) site. Residues histidine 16–arginine 18 and asparagine 42 each bind substrate. Positions 100, 137, and 175 each coordinate Zn(2+). Lysine 100 is modified (N6-carboxylysine). Histidine 137 lines the substrate pocket. Leucine 220 contacts substrate. Aspartate 248 lines the Zn(2+) pocket. Aspartate 248 is a catalytic residue. Residues histidine 252 and alanine 264 each contribute to the substrate site.

This sequence belongs to the metallo-dependent hydrolases superfamily. DHOase family. Class II DHOase subfamily. As to quaternary structure, homodimer. Zn(2+) serves as cofactor.

The catalysed reaction is (S)-dihydroorotate + H2O = N-carbamoyl-L-aspartate + H(+). It participates in pyrimidine metabolism; UMP biosynthesis via de novo pathway; (S)-dihydroorotate from bicarbonate: step 3/3. Catalyzes the reversible cyclization of carbamoyl aspartate to dihydroorotate. This is Dihydroorotase from Sphingopyxis alaskensis (strain DSM 13593 / LMG 18877 / RB2256) (Sphingomonas alaskensis).